A 460-amino-acid chain; its full sequence is GTPase Der (460 aa).

2 EngA-type G domains span residues 3-167 and 189-364; these read FTIA…PEPT and IRVA…AIWN. GTP is bound by residues 9–16, 56–60, 119–122, 195–202, 242–246, and 307–310; these read GRPNVGKS, DTAGL, NKSE, GRPNAGKS, and NKWD. Residues 365–449 form the KH-like domain; sequence RRVPTAALNR…PIRITLREKA (85 aa).

The protein belongs to the TRAFAC class TrmE-Era-EngA-EngB-Septin-like GTPase superfamily. EngA (Der) GTPase family. As to quaternary structure, associates with the 50S ribosomal subunit.

Its function is as follows. GTPase that plays an essential role in the late steps of ribosome biogenesis. The sequence is that of GTPase Der from Nitrobacter hamburgensis (strain DSM 10229 / NCIMB 13809 / X14).